The following is a 185-amino-acid chain: Prenylated Rab acceptor protein 1 (185 aa).

Residues Met1–Tyr78 lie on the Cytoplasmic side of the membrane. Residues Ala30–Phe54 are required for interaction with prenylated RAB3A and VAMP2. 2 consecutive transmembrane segments (helical) span residues Val79–Pro94 and Met95–Leu112. Topologically, residues Arg113–Gln131 are cytoplasmic. 2 helical membrane passes run Tyr132–Ala148 and Gly149–Ser165. The segment at Ser165–Val185 is required for interaction with GDI1. The Cytoplasmic portion of the chain corresponds to His166–Val185. Residues Ala175–Val185 are required for interaction with prenylated RAB3A and VAMP2. The tract at residues Ala175–Val185 is homodimerization.

This sequence belongs to the PRA1 family. Homodimers. Interacts specifically with both prenylated Rab proteins (including RAB3A and RAB1), and VAMP2 (synaptobrevin-2), in an exclusive way. Interacts with NDRG1. Interacts with free GDI1 in the absence of Rab proteins. Also interacts with PCLO. As to expression, ubiquitous.

The protein localises to the cell membrane. It is found in the cytoplasm. Its subcellular location is the golgi apparatus. It localises to the cytoplasmic vesicle. The protein resides in the secretory vesicle. The protein localises to the synaptic vesicle. General Rab protein regulator required for vesicle formation from the Golgi complex. May control vesicle docking and fusion by mediating the action of Rab GTPases to the SNARE complexes. In addition it inhibits the removal of Rab GTPases from the membrane by GDI1. This is Prenylated Rab acceptor protein 1 (Rabac1) from Rattus norvegicus (Rat).